We begin with the raw amino-acid sequence, 210 residues long: Thymidylate kinase (210 aa).

Glycine 10–serine 17 lines the ATP pocket.

It belongs to the thymidylate kinase family.

The enzyme catalyses dTMP + ATP = dTDP + ADP. In terms of biological role, phosphorylation of dTMP to form dTDP in both de novo and salvage pathways of dTTP synthesis. This chain is Thymidylate kinase (tmk), found in Haemophilus influenzae (strain ATCC 51907 / DSM 11121 / KW20 / Rd).